Reading from the N-terminus, the 247-residue chain is tRNA uridine(34) hydroxylase (247 aa).

One can recognise a Rhodanese domain in the interval T124–N218. The Cysteine persulfide intermediate role is filled by C178.

Belongs to the TrhO family.

The catalysed reaction is uridine(34) in tRNA + AH2 + O2 = 5-hydroxyuridine(34) in tRNA + A + H2O. Catalyzes oxygen-dependent 5-hydroxyuridine (ho5U) modification at position 34 in tRNAs. This is tRNA uridine(34) hydroxylase from Rickettsia africae (strain ESF-5).